Reading from the N-terminus, the 303-residue chain is Coenzyme PQQ synthesis protein B (303 aa).

The protein belongs to the PqqB family.

It functions in the pathway cofactor biosynthesis; pyrroloquinoline quinone biosynthesis. Functionally, may be involved in the transport of PQQ or its precursor to the periplasm. This is Coenzyme PQQ synthesis protein B from Pseudomonas fluorescens (strain Pf0-1).